The primary structure comprises 326 residues: DNA-directed RNA polymerase subunit alpha (326 aa).

Residues 1–231 (MQTALLKPKI…DQLSVFAALE (231 aa)) form an alpha N-terminal domain (alpha-NTD) region. The tract at residues 247 to 326 (IDPILLRPVD…ENWPPAGLEK (80 aa)) is alpha C-terminal domain (alpha-CTD).

The protein belongs to the RNA polymerase alpha chain family. As to quaternary structure, homodimer. The RNAP catalytic core consists of 2 alpha, 1 beta, 1 beta' and 1 omega subunit. When a sigma factor is associated with the core the holoenzyme is formed, which can initiate transcription.

The enzyme catalyses RNA(n) + a ribonucleoside 5'-triphosphate = RNA(n+1) + diphosphate. Its function is as follows. DNA-dependent RNA polymerase catalyzes the transcription of DNA into RNA using the four ribonucleoside triphosphates as substrates. This Cupriavidus necator (strain ATCC 17699 / DSM 428 / KCTC 22496 / NCIMB 10442 / H16 / Stanier 337) (Ralstonia eutropha) protein is DNA-directed RNA polymerase subunit alpha.